The sequence spans 217 residues: Probable GTP-binding protein EngB (217 aa).

The EngB-type G domain maps to 33-217 (GPAEIAFAGR…RITIEQAVAR (185 aa)). GTP contacts are provided by residues 41-48 (GRSNVGKS), 68-72 (GRTQE), 95-98 (DMPG), 162-165 (TKTD), and 196-198 (TSS). 2 residues coordinate Mg(2+): serine 48 and threonine 70.

It belongs to the TRAFAC class TrmE-Era-EngA-EngB-Septin-like GTPase superfamily. EngB GTPase family. Requires Mg(2+) as cofactor.

Functionally, necessary for normal cell division and for the maintenance of normal septation. The polypeptide is Probable GTP-binding protein EngB (Sinorhizobium fredii (strain NBRC 101917 / NGR234)).